The following is a 787-amino-acid chain: MAAESSLRVATPTLCNLNGSQRRPTTTTLSPLRFMGFRPRPSSHSLTSSSLSHFFGSTRIHSNSSSSYSSISRQHAPRRNFSVFAMSADDAKRSVPLKDYRNIGIMAHIDAGKTTTTERILYYTGRNYKIGEVHEGTATMDWMEQEQERGITITSAATTTFWNKHRINIIDTPGHVDFTLEVERALRVLDGAICLFDSVAGVEPQSETVWRQADKYGVPRICFVNKMDRLGANFYRTRDMIVTNLGAKPLVIQLPIGSEDNFKGVIDLVRNKAIVWSGEELGAKFDIVDIPEDLQEQAQDYRAQMIENIVEFDDQAMENYLEGIEPDEETIKKLIRKGTISASFVPVMCGSAFKNKGVQPLLDAVVDYLPSPLDLPAMKGSDPENPEATIERLASDDEPFAGLAFKIMSDPFVGSLTFVRVYAGKLGAGSYVLNANKGKKERIGRLLEMHANSRDDVKVALAGDIIALAGLKDTITGETLCDPDNPIVLERMDFPDPVIKVAIEPKTKADVDKMATGLIKLAQEDPSFHFSRDEEINQTVIEGMGELHLEIIVDRLKREFKVEANVGAPQVNYRESISKISEVKYVHKKQSGGQGQFADITVRFEPMDPGSGYEFKSEIKGGAVPREYIPGVMKGLEECMSNGVLAGFPVVDVRAVLTDGSYHDVDSSVLAFQLAARGAFREGIRKAGPRMLEPIMKVEVVTPEEHLGDVIGDLNSRRGQINSFGDKPGGLKVVDSLVPLAEMFQYVSTLRGMTKGRASYTMQLAMFDVVPQHIQNQLATKEQEVAA.

The N-terminal 86 residues, 1–86 (MAAESSLRVA…PRRNFSVFAM (86 aa)), are a transit peptide targeting the chloroplast. Polar residues predominate over residues 14-24 (LCNLNGSQRRP). Residues 14–34 (LCNLNGSQRRPTTTTLSPLRF) are disordered. The tr-type G domain maps to 98–373 (KDYRNIGIMA…AVVDYLPSPL (276 aa)). Residues 107–114 (AHIDAGKT), 171–175 (DTPGH), and 225–228 (NKMD) contribute to the GTP site.

It belongs to the TRAFAC class translation factor GTPase superfamily. Classic translation factor GTPase family. EF-G/EF-2 subfamily.

It localises to the plastid. Its subcellular location is the chloroplast. It participates in protein biosynthesis; polypeptide chain elongation. Functionally, chloroplast-localized elongation factor EF-G involved in protein synthesis in plastids. Catalyzes the GTP-dependent ribosomal translocation step during translation elongation. During this step, the ribosome changes from the pre-translocational (PRE) to the post-translocational (POST) state as the newly formed A-site-bound peptidyl-tRNA and P-site-bound deacylated tRNA move to the P and E sites, respectively. Catalyzes the coordinated movement of the two tRNA molecules, the mRNA and conformational changes in the ribosome. The chain is Elongation factor G-1, chloroplastic (fusA1) from Glycine max (Soybean).